Consider the following 317-residue polypeptide: MTFLARLSSSTGDLSTKLVDYVQLTKPRLILLFLITTAAAMEVAGQGRVSPQLLLITLGSGTCAAAAANTINCLYDRDIDAVMERTRHRPLPAGRVAPWEAVFLAVLLAITAFSLLAAFANLLSACLAMAGIAVYVGVYTHWLKRSSPQNIVIGGAAGAIPPLVGWAAVTGELSWAAWVLFGMIFVWTPPHFWPLAMLIQEDYARVQVPMLPVVGGDRVTAQQIFLYTLALVPTSLLLVYPCGVVSWGYGVVAIALGSWFIYRAWQLTQAPAERERARRLFKFSILYMMLLCAAMVGDRLLLPHLSAGLNALGALLK.

The next 9 membrane-spanning stretches (helical) occupy residues 29-49 (LILLFLITTAAAMEVAGQGRV), 53-73 (LLLITLGSGTCAAAAANTINC), 102-122 (VFLAVLLAITAFSLLAAFANL), 123-143 (LSACLAMAGIAVYVGVYTHWL), 151-171 (IVIGGAAGAIPPLVGWAAVTG), 179-199 (VLFGMIFVWTPPHFWPLAMLI), 224-241 (IFLYTLALVPTSLLLVYP), 245-267 (VSWGYGVVAIALGSWFIYRAWQL), and 283-303 (FSILYMMLLCAAMVGDRLLLP).

It belongs to the UbiA prenyltransferase family. Protoheme IX farnesyltransferase subfamily.

Its subcellular location is the cell inner membrane. The enzyme catalyses heme b + (2E,6E)-farnesyl diphosphate + H2O = Fe(II)-heme o + diphosphate. The protein operates within porphyrin-containing compound metabolism; heme O biosynthesis; heme O from protoheme: step 1/1. Functionally, converts heme B (protoheme IX) to heme O by substitution of the vinyl group on carbon 2 of heme B porphyrin ring with a hydroxyethyl farnesyl side group. This Thermosynechococcus vestitus (strain NIES-2133 / IAM M-273 / BP-1) protein is Protoheme IX farnesyltransferase.